We begin with the raw amino-acid sequence, 555 residues long: Adenine deaminase (555 aa).

The protein belongs to the metallo-dependent hydrolases superfamily. Adenine deaminase family. Mn(2+) is required as a cofactor.

It catalyses the reaction adenine + H2O + H(+) = hypoxanthine + NH4(+). This is Adenine deaminase from Methanosarcina mazei (strain ATCC BAA-159 / DSM 3647 / Goe1 / Go1 / JCM 11833 / OCM 88) (Methanosarcina frisia).